We begin with the raw amino-acid sequence, 510 residues long: Amidophosphoribosyltransferase (510 aa).

Catalysis depends on Cys-2, which acts as the Nucleophile. The 238-residue stretch at 2 to 239 folds into the Glutamine amidotransferase type-2 domain; that stretch reads CGILGIVLAN…PGEAVIIPKN (238 aa). Mg(2+)-binding residues include Asp-373 and Asp-374.

In the C-terminal section; belongs to the purine/pyrimidine phosphoribosyltransferase family. Mg(2+) is required as a cofactor.

The enzyme catalyses 5-phospho-beta-D-ribosylamine + L-glutamate + diphosphate = 5-phospho-alpha-D-ribose 1-diphosphate + L-glutamine + H2O. The protein operates within purine metabolism; IMP biosynthesis via de novo pathway; N(1)-(5-phospho-D-ribosyl)glycinamide from 5-phospho-alpha-D-ribose 1-diphosphate: step 1/2. This Saccharomyces cerevisiae (strain ATCC 204508 / S288c) (Baker's yeast) protein is Amidophosphoribosyltransferase (ADE4).